Here is a 143-residue protein sequence, read N- to C-terminus: Ribonuclease H (143 aa).

The RNase H type-1 domain maps to 1–141; the sequence is MKHVEIFTDG…VDKLASDAAL (141 aa). Residues Asp-9, Glu-47, Asp-69, and Asp-133 each contribute to the Mg(2+) site.

This sequence belongs to the RNase H family. In terms of assembly, monomer. Mg(2+) serves as cofactor.

Its subcellular location is the cytoplasm. It catalyses the reaction Endonucleolytic cleavage to 5'-phosphomonoester.. In terms of biological role, endonuclease that specifically degrades the RNA of RNA-DNA hybrids. The chain is Ribonuclease H from Novosphingobium aromaticivorans (strain ATCC 700278 / DSM 12444 / CCUG 56034 / CIP 105152 / NBRC 16084 / F199).